A 944-amino-acid polypeptide reads, in one-letter code: Tyrosine-protein kinase transmembrane receptor ROR2 (944 aa).

The first 33 residues, 1-33 (MARGWVRPSRVPLCARAVWTAAALLLWTPWTAG), serve as a signal peptide directing secretion. Residues 34–403 (EVEDSEAIDT…CSPRDGSKMG (370 aa)) are Extracellular-facing. In terms of domain architecture, Ig-like C2-type spans 55-145 (PTLKGYFLNF…VATNGLKTIT (91 aa)). Asn-70 carries N-linked (GlcNAc...) asparagine glycosylation. 9 cysteine pairs are disulfide-bonded: Cys-83-Cys-135, Cys-174-Cys-239, Cys-182-Cys-232, Cys-223-Cys-264, Cys-252-Cys-300, Cys-256-Cys-286, Cys-316-Cys-394, Cys-337-Cys-377, and Cys-365-Cys-389. Residues 169–303 (QEDGFCQPYR…SPDAANCMRI (135 aa)) enclose the FZ domain. Asn-188 is a glycosylation site (N-linked (GlcNAc...) asparagine). Residues 316 to 394 (CYNGSGADYR…RVELCDVPPC (79 aa)) enclose the Kringle domain. Asn-318 carries an N-linked (GlcNAc...) asparagine glycan. Residues 404–424 (ILYILVPSIAIPLVIACLFFL) form a helical membrane-spanning segment. Residues 425–944 (VCMCRNKQKA…TEAAHVQLEA (520 aa)) lie on the Cytoplasmic side of the membrane. In terms of domain architecture, Protein kinase spans 473–746 (VRFMEELGED…PRFKDIHSRL (274 aa)). ATP-binding positions include 479–487 (LGEDRFGKV) and Lys-507. Asp-615 functions as the Proton acceptor in the catalytic mechanism. Tyr-646 is subject to Phosphotyrosine; by autocatalysis. The disordered stretch occupies residues 757–779 (SSAQTSGASNTTQTSSLSTSPVS). Low complexity predominate over residues 765–779 (SNTTQTSSLSTSPVS). An Asymmetric dimethylarginine modification is found at Arg-785. Disordered regions lie at residues 850–879 (QVPP…TAPS) and 898–929 (QNIA…LGDN). Residues 857-872 (PKPSSHHSGSGSTSTG) are compositionally biased toward low complexity.

Belongs to the protein kinase superfamily. Tyr protein kinase family. ROR subfamily. In terms of assembly, homodimer; promotes osteogenesis. Binds YWHAB. Interacts with WTIP. Interacts with ROR2. It depends on Mg(2+) as a cofactor.

The protein resides in the cell membrane. The enzyme catalyses L-tyrosyl-[protein] + ATP = O-phospho-L-tyrosyl-[protein] + ADP + H(+). Tyrosine-protein kinase receptor which may be involved in the early formation of the chondrocytes. It seems to be required for cartilage and growth plate development. Phosphorylates YWHAB, leading to induction of osteogenesis and bone formation. In contrast, has also been shown to have very little tyrosine kinase activity in vitro. May act as a receptor for wnt ligand WNT5A which may result in the inhibition of WNT3A-mediated signaling. This is Tyrosine-protein kinase transmembrane receptor ROR2 (Ror2) from Mus musculus (Mouse).